We begin with the raw amino-acid sequence, 214 residues long: Vascular endothelial growth factor A (214 aa).

An N-terminal signal peptide occupies residues 1–26 (MNFLLSWVHWTLALLLYLHHAKWSQA). 3 disulfides stabilise this stretch: C51–C93, C82–C127, and C86–C129. The N-linked (GlcNAc...) asparagine glycan is linked to N100. Basic and acidic residues predominate over residues 131–142 (PKKDRTKPEKKS). The interval 131–159 (PKKDRTKPEKKSVRGKGKGQKRKRKKSRF) is disordered. Residues 143–159 (VRGKGKGQKRKRKKSRF) show a composition bias toward basic residues.

Belongs to the PDGF/VEGF growth factor family. In terms of assembly, homodimer; disulfide-linked. Also found as heterodimer with PGF. Interacts with NRP1. Interacts with isoform 2 of BSG. Interacts with CD82; this interaction inhibits VEGFA-mediated signaling pathway. As to expression, expressed in the pituitary, in brain, in particularly in supraoptic and paraventricular nuclei and the choroid plexus. Also found abundantly in the corpus luteum of the ovary and in kidney glomeruli. Expressed in the ductal epithelial cells of post-pubertal mammary glands. Expressed in the ductal and alveolar epithelial cells throughout the whole period of gestational evolution, lactation and involution.

Its subcellular location is the secreted. Growth factor active in angiogenesis, vasculogenesis and endothelial cell growth. Induces endothelial cell proliferation, promotes cell migration, inhibits apoptosis and induces permeabilization of blood vessels. Binds to the FLT1/VEGFR1 and KDR/VEGFR2 receptors, heparan sulfate and heparin. May play a role in increasing vascular permeability during lactation, when increased transport of molecules from the blood is required for efficient milk protein synthesis. Binding to NRP1 receptor initiates a signaling pathway needed for motor neuron axon guidance and cell body migration, including for the caudal migration of facial motor neurons from rhombomere 4 to rhombomere 6 during embryonic development. Also binds the DEAR/FBXW7-AS1 receptor. The sequence is that of Vascular endothelial growth factor A (Vegfa) from Rattus norvegicus (Rat).